Here is a 528-residue protein sequence, read N- to C-terminus: Tubulin-specific chaperone E (528 aa).

In terms of domain architecture, CAP-Gly spans 27–71; it reads GLVPPVAGLWLGVEWDNPERGKHDGSHEGTVYFKCRHPTAGSFIR. LRR repeat units follow at residues 152-176, 178-206, 207-229, 231-253, 254-274, 279-300, and 309-330; these read CPNI…DIAD, LKHL…TFPT, LKVL…ASGW, VLEK…DVLQ, TVKL…LFLI, RLEQ…DAGI, and SLQY…NELD. Residues 343-385 form the LRRCT domain; sequence NPLTEGSKDAQTTRQFIIARIGQLRTLNKCAIEPEERRGAELD. The residue at position 464 (Lys464) is an N6-acetyllysine. Ser496 bears the Phosphoserine mark.

This sequence belongs to the TBCE family. As to quaternary structure, supercomplex made of cofactors A to E. Cofactors A and D function by capturing and stabilizing tubulin in a quasi-native conformation. Cofactor E binds to the cofactor D-tubulin complex; interaction with cofactor C then causes the release of tubulin polypeptides that are committed to the native state. Cofactors B and E can form a heterodimer which binds to alpha-tubulin and enhances their ability to dissociate tubulin heterodimers. Interacts with TBCD.

It localises to the cytoplasm. The protein localises to the cytoskeleton. Functionally, tubulin-folding protein; involved in the second step of the tubulin folding pathway and in the regulation of tubulin heterodimer dissociation. Required for correct organization of microtubule cytoskeleton and mitotic splindle, and maintenance of the neuronal microtubule network. This Bos taurus (Bovine) protein is Tubulin-specific chaperone E (TBCE).